A 72-amino-acid polypeptide reads, in one-letter code: Protein SlyX homolog (72 aa).

This sequence belongs to the SlyX family.

The protein is Protein SlyX homolog of Bradyrhizobium diazoefficiens (strain JCM 10833 / BCRC 13528 / IAM 13628 / NBRC 14792 / USDA 110).